The following is a 65-amino-acid chain: Weak toxin CM-13b (65 aa).

5 cysteine pairs are disulfide-bonded: Cys3-Cys24, Cys6-Cys11, Cys17-Cys42, Cys46-Cys57, and Cys58-Cys63.

Belongs to the three-finger toxin family. Ancestral subfamily. Orphan group II sub-subfamily. Expressed by the venom gland.

The protein localises to the secreted. Binds with low affinity to muscular (alpha-1-beta-1-delta-epsilon/CHRNA1-CHRNB1-CHRND-CHRNE) and very low affinity to neuronal (alpha-7/CHRNA7) nicotinic acetylcholine receptor (nAChR). In Naja annulifera (Banded Egyptian cobra), this protein is Weak toxin CM-13b.